Here is an 88-residue protein sequence, read N- to C-terminus: Small ribosomal subunit protein uS15c (88 aa).

It belongs to the universal ribosomal protein uS15 family. Part of the 30S ribosomal subunit.

The protein resides in the plastid. Its subcellular location is the chloroplast. This Barbarea verna (Land cress) protein is Small ribosomal subunit protein uS15c (rps15).